We begin with the raw amino-acid sequence, 225 residues long: Large ribosomal subunit protein mL58 (225 aa).

The disordered stretch occupies residues 106-138; it reads PQAPITTPESSSTDAAAADQHGDLPPVLYNPTK. Residues 109-119 show a composition bias toward polar residues; that stretch reads PITTPESSSTD.

This sequence belongs to the mitochondrion-specific ribosomal protein mL58 family. In terms of assembly, component of the mitochondrial large ribosomal subunit (mt-LSU). Mature N.crassa 74S mitochondrial ribosomes consist of a small (37S) and a large (54S) subunit. The 37S small subunit contains a 16S ribosomal RNA (16S mt-rRNA) and 32 different proteins. The 54S large subunit contains a 23S rRNA (23S mt-rRNA) and 42 different proteins.

It localises to the mitochondrion. In terms of biological role, component of the mitochondrial ribosome (mitoribosome), a dedicated translation machinery responsible for the synthesis of mitochondrial genome-encoded proteins, including at least some of the essential transmembrane subunits of the mitochondrial respiratory chain. The mitoribosomes are attached to the mitochondrial inner membrane and translation products are cotranslationally integrated into the membrane. This Neurospora crassa (strain ATCC 24698 / 74-OR23-1A / CBS 708.71 / DSM 1257 / FGSC 987) protein is Large ribosomal subunit protein mL58 (mrpl20).